The chain runs to 704 residues: UvrABC system protein B (704 aa).

The 154-residue stretch at 35–188 (ERINNGEKDV…DDLLRKFVSM (154 aa)) folds into the Helicase ATP-binding domain. 48–55 (GATGTGKS) contributes to the ATP binding site. A Beta-hairpin motif is present at residues 101-124 (YYDYYQPEAYVAQTDTFIEKDSSI). Residues 438–604 (QIDDLLGEIR…PLRKKIADIT (167 aa)) form the Helicase C-terminal domain. In terms of domain architecture, UVR spans 659-694 (VGMIAQLTEQMHGAAAELQFEVAARIRDEVSELKKE).

Belongs to the UvrB family. As to quaternary structure, forms a heterotetramer with UvrA during the search for lesions. Interacts with UvrC in an incision complex.

The protein resides in the cytoplasm. Functionally, the UvrABC repair system catalyzes the recognition and processing of DNA lesions. A damage recognition complex composed of 2 UvrA and 2 UvrB subunits scans DNA for abnormalities. Upon binding of the UvrA(2)B(2) complex to a putative damaged site, the DNA wraps around one UvrB monomer. DNA wrap is dependent on ATP binding by UvrB and probably causes local melting of the DNA helix, facilitating insertion of UvrB beta-hairpin between the DNA strands. Then UvrB probes one DNA strand for the presence of a lesion. If a lesion is found the UvrA subunits dissociate and the UvrB-DNA preincision complex is formed. This complex is subsequently bound by UvrC and the second UvrB is released. If no lesion is found, the DNA wraps around the other UvrB subunit that will check the other stand for damage. This Pseudarthrobacter chlorophenolicus (strain ATCC 700700 / DSM 12829 / CIP 107037 / JCM 12360 / KCTC 9906 / NCIMB 13794 / A6) (Arthrobacter chlorophenolicus) protein is UvrABC system protein B.